The primary structure comprises 497 residues: Cytochrome P450 monooxygenase cicH (497 aa).

A helical membrane pass occupies residues 2–19 (AILVRLFFALFVVSVYFF). Position 439 (Cys439) interacts with heme. Asn443 is a glycosylation site (N-linked (GlcNAc...) asparagine).

Belongs to the cytochrome P450 family. Heme serves as cofactor.

Its subcellular location is the membrane. It functions in the pathway phytotoxin biosynthesis. In terms of biological role, cytochrome P450 monooxygenase; part of the gene cluster that mediates the biosynthesis of cichorine, a phytotoxin active against knapweed, corn, and soybeans. The first step in the pathway is performed by the non-reducing polyketide synthase pkbA that condenses one acetyl-CoA starter unit with 3 malonyl-CoA units. PkbA also catalyzes one methylation step to produce 3-methylorsellinate. The nonribosomal peptide synthase-like protein cicB, the cytochrome P450 monooxygenase cicH and the O-methyltransferase cicE are involved in the conversion of 3-methylorsellinate into nidulol. CicB converts 3-methylorsellinate to a yet unidentified intermediate, cicH may play a ring-closing role for cichorine and cicE is plausibly responsible for the methylation of one of the phenol groups. The oxidoreductase cicC acts downstream with still unidentified enzymes to further convert nidulol into cichorine. This Emericella nidulans (strain FGSC A4 / ATCC 38163 / CBS 112.46 / NRRL 194 / M139) (Aspergillus nidulans) protein is Cytochrome P450 monooxygenase cicH.